We begin with the raw amino-acid sequence, 42 residues long: QGVRNHVTCRIYGGFCVPIRCPGRTRQIGTCFGRPVKCCRRW.

The residue at position 1 (Q1) is a Pyrrolidone carboxylic acid. 3 disulfide bridges follow: C9–C38, C16–C31, and C21–C39.

The protein belongs to the beta-defensin family. In terms of tissue distribution, neutrophilic granules.

The protein resides in the secreted. Has bactericidal activity. Active against E.coli ML35 and S.aureus 502A. In Bos taurus (Bovine), this protein is Beta-defensin 6 (DEFB6).